The chain runs to 316 residues: Thymidylate synthase (316 aa).

DUMP contacts are provided by residues Arg23 and 178-179; that span reads RR. Cys198 serves as the catalytic Nucleophile. Residues 218 to 221, Asn229, and 259 to 261 each bind dUMP; these read RSAD and HIY. Asp221 is a binding site for (6R)-5,10-methylene-5,6,7,8-tetrahydrofolate. Residue Ala315 coordinates (6R)-5,10-methylene-5,6,7,8-tetrahydrofolate.

The protein belongs to the thymidylate synthase family. Bacterial-type ThyA subfamily. As to quaternary structure, homodimer.

The protein localises to the cytoplasm. The enzyme catalyses dUMP + (6R)-5,10-methylene-5,6,7,8-tetrahydrofolate = 7,8-dihydrofolate + dTMP. Its pathway is pyrimidine metabolism; dTTP biosynthesis. Functionally, catalyzes the reductive methylation of 2'-deoxyuridine-5'-monophosphate (dUMP) to 2'-deoxythymidine-5'-monophosphate (dTMP) while utilizing 5,10-methylenetetrahydrofolate (mTHF) as the methyl donor and reductant in the reaction, yielding dihydrofolate (DHF) as a by-product. This enzymatic reaction provides an intracellular de novo source of dTMP, an essential precursor for DNA biosynthesis. The chain is Thymidylate synthase from Levilactobacillus brevis (strain ATCC 367 / BCRC 12310 / CIP 105137 / JCM 1170 / LMG 11437 / NCIMB 947 / NCTC 947) (Lactobacillus brevis).